The following is a 266-amino-acid chain: Glutaconate CoA-transferase subunit B (266 aa).

Residue E54 is part of the active site.

It belongs to the 3-oxoacid CoA-transferase subunit B family. As to quaternary structure, heterooctamer of four A and four B subunits.

It localises to the cytoplasm. The enzyme catalyses trans-glutaconate + acetyl-CoA = (2E)-glutaconyl-CoA + acetate. It functions in the pathway amino-acid degradation; L-glutamate degradation via hydroxyglutarate pathway; crotonoyl-CoA from L-glutamate: step 3/5. In terms of biological role, catalyzes the transfer of the CoA moiety from acetyl-CoA to (R)-2-hydroxyglutarate and related compounds like glutaconate. The sequence is that of Glutaconate CoA-transferase subunit B (gctB) from Acidaminococcus fermentans (strain ATCC 25085 / DSM 20731 / CCUG 9996 / CIP 106432 / VR4).